A 170-amino-acid chain; its full sequence is Small ribosomal subunit protein uS3mB (170 aa).

The N-terminal 30 residues, 1–30 (MAAPVMSAFGRLQGLIRTERSLLTHVQSRC), are a transit peptide targeting the mitochondrion.

The protein belongs to the universal ribosomal protein uS3 family. As to quaternary structure, component of the mitochondrial ribosome small subunit (28S) which comprises a 12S rRNA and about 30 distinct proteins.

It is found in the mitochondrion. This is Small ribosomal subunit protein uS3mB (mrps24-b) from Xenopus laevis (African clawed frog).